Consider the following 430-residue polypeptide: Adenylosuccinate synthetase (430 aa).

Residues Gly-12–Lys-18 and Gly-40–Thr-42 contribute to the GTP site. The active-site Proton acceptor is Asp-13. Residues Asp-13 and Gly-40 each coordinate Mg(2+). Residues Asp-13–Lys-16, Asn-38–His-41, Thr-128, Arg-142, Gln-223, Thr-238, and Arg-302 contribute to the IMP site. The Proton donor role is filled by His-41. Residue Thr-298–Arg-304 participates in substrate binding. GTP-binding positions include Arg-304, Ser-330–Asp-332, and Ser-412–Gly-414.

It belongs to the adenylosuccinate synthetase family. Homodimer. Mg(2+) is required as a cofactor.

Its subcellular location is the cytoplasm. The catalysed reaction is IMP + L-aspartate + GTP = N(6)-(1,2-dicarboxyethyl)-AMP + GDP + phosphate + 2 H(+). It participates in purine metabolism; AMP biosynthesis via de novo pathway; AMP from IMP: step 1/2. Functionally, plays an important role in the de novo pathway of purine nucleotide biosynthesis. Catalyzes the first committed step in the biosynthesis of AMP from IMP. This is Adenylosuccinate synthetase from Streptococcus pyogenes serotype M5 (strain Manfredo).